The sequence spans 424 residues: 3-isopropylmalate dehydratase large subunit 2 (424 aa).

Positions 299, 359, and 362 each coordinate [4Fe-4S] cluster.

Belongs to the aconitase/IPM isomerase family. LeuC type 2 subfamily. As to quaternary structure, heterodimer of LeuC and LeuD. [4Fe-4S] cluster serves as cofactor.

It catalyses the reaction (2R,3S)-3-isopropylmalate = (2S)-2-isopropylmalate. It participates in amino-acid biosynthesis; L-leucine biosynthesis; L-leucine from 3-methyl-2-oxobutanoate: step 2/4. Catalyzes the isomerization between 2-isopropylmalate and 3-isopropylmalate, via the formation of 2-isopropylmaleate. This chain is 3-isopropylmalate dehydratase large subunit 2, found in Rubrobacter xylanophilus (strain DSM 9941 / JCM 11954 / NBRC 16129 / PRD-1).